The sequence spans 246 residues: Probable transcriptional regulatory protein CLL_A1008 (246 aa).

It belongs to the TACO1 family.

It localises to the cytoplasm. The protein is Probable transcriptional regulatory protein CLL_A1008 of Clostridium botulinum (strain Eklund 17B / Type B).